The primary structure comprises 515 residues: tRNA pseudouridine synthase Pus10 (515 aa).

Positions 21 and 24 each coordinate Zn(2+). Positions 42–85 (KEVTYELQKYLSHGDPAEENDTPPSKKAKIEEDTSSNEHLGNCE) form a coiled coil. Residues 55-82 (GDPAEENDTPPSKKAKIEEDTSSNEHLG) form a disordered region. Cys-96 and Cys-99 together coordinate Zn(2+). Residues 291–304 (TPWIIDGERKIESS) form an RNA binding forefinger loop region. Asp-331 serves as the catalytic Nucleophile. The segment at 428-443 (QKTPLRVLHRRPLASR) is RNA binding thumb loop.

Belongs to the pseudouridine synthase Pus10 family.

It localises to the nucleus. Its subcellular location is the cytoplasm. The protein localises to the mitochondrion. It carries out the reaction uridine(55) in tRNA = pseudouridine(55) in tRNA. The enzyme catalyses uridine(54) in tRNA = pseudouridine(54) in tRNA. Protein with different functions depending on its subcellular location: involved in miRNA processing in the nucleus and acts as a tRNA pseudouridylate synthase in the cytoplasm. In the cytoplasm, acts as a pseudouridylate synthase by catalyzing synthesis of pseudouridine(54) and pseudouridine(55) from uracil-54 and uracil-55, respectively, in the psi GC loop of a subset of tRNAs. tRNA pseudouridylate synthase activity is enhanced by the presence of 1-methyladenosine at position 53-61 of tRNAs. Does not show tRNA pseudouridylate synthase activity in the nucleus. In the nucleus, promotes primary microRNAs (pri-miRNAs) processing independently of its RNA pseudouridylate synthase activity. Binds pri-miRNAs. The sequence is that of tRNA pseudouridine synthase Pus10 from Xenopus laevis (African clawed frog).